Here is a 163-residue protein sequence, read N- to C-terminus: Endoribonuclease YbeY (163 aa).

Zn(2+) is bound by residues H123, H127, and H133.

The protein belongs to the endoribonuclease YbeY family. Requires Zn(2+) as cofactor.

The protein localises to the cytoplasm. Single strand-specific metallo-endoribonuclease involved in late-stage 70S ribosome quality control and in maturation of the 3' terminus of the 16S rRNA. This chain is Endoribonuclease YbeY, found in Helicobacter hepaticus (strain ATCC 51449 / 3B1).